Reading from the N-terminus, the 229-residue chain is All-trans retinoic acid-induced differentiation factor (229 aa).

The signal sequence occupies residues 1-30 (MAPHDPGSLTTLVPWAAALLLALGVERALA). Over 31-199 (LPEICTQCPG…YKCMRQGSFS (169 aa)) the chain is Extracellular. Residues N44, N79, N157, and N168 are each glycosylated (N-linked (GlcNAc...) asparagine). Positions 152 to 193 (QKNLCNNTGDPEMCPENGSCVPDGPGLLQCVCADGFHGYKCM) constitute an EGF-like domain. Disulfide bonds link C156-C171, C165-C181, and C183-C192. The helical transmembrane segment at 200–220 (LLMFFGILGATTLSVSILLWA) threads the bilayer. Topologically, residues 221-229 (TQRRKAKTS) are cytoplasmic.

In terms of assembly, interacts with NELL1; the interaction promotes osteoblastic differentiation and mineralization. Interacts with SLC37A3; the interaction is direct and both proteins are mutually dependent for their stability. Weakly expressed in hematopoietic cell lines.

The protein localises to the nucleus envelope. It localises to the cell membrane. The protein resides in the lysosome membrane. Promotes osteoblast cell differentiation and terminal mineralization. Plays a role in inducing the cell cycle arrest via inhibiting CCND1 expression in all-trans-retinoic acid (ATRA) signal pathway. In osteoclasts, forms a transporter complex with ATRAID for nitrogen-containing-bisphophonates (N-BPs) required for releasing N-BP molecules that have trafficked to lysosomes through fluid-phase endocytosis into the cytosol. This is All-trans retinoic acid-induced differentiation factor from Homo sapiens (Human).